Consider the following 332-residue polypeptide: Nuclear migration protein nudC (332 aa).

The segment at 122–161 (RQQLLDSAGGEPSASNRDGISKPIEKVDDESDKSELGKLM) is disordered. One can recognise a CS domain in the interval 168 to 259 (CTLENYTWTQ…NKMNWWSRLV (92 aa)).

The protein belongs to the nudC family. In terms of assembly, interacts with PCID2.

Its subcellular location is the cytoplasm. Chaperone protein with functions in nuclear localization and cytoplasmic mRNA trafficking. In postmitotic neurons, acts with nudE downstream of dar1 to ensure correct positioning of the nuclei in primary dendrites and as a consequence, is required for determining multipolar neuron morphology. Stabilizes PCID2 in the cytoplasm and thereby is required for promoting cytoplasmic mRNA trafficking. This Drosophila melanogaster (Fruit fly) protein is Nuclear migration protein nudC.